The following is a 92-amino-acid chain: Small ribosomal subunit protein uS19 (92 aa).

Belongs to the universal ribosomal protein uS19 family.

In terms of biological role, protein S19 forms a complex with S13 that binds strongly to the 16S ribosomal RNA. The sequence is that of Small ribosomal subunit protein uS19 from Magnetococcus marinus (strain ATCC BAA-1437 / JCM 17883 / MC-1).